Here is a 223-residue protein sequence, read N- to C-terminus: Putative N-acetylmannosamine-6-phosphate 2-epimerase (223 aa).

It belongs to the NanE family.

The enzyme catalyses an N-acyl-D-glucosamine 6-phosphate = an N-acyl-D-mannosamine 6-phosphate. It participates in amino-sugar metabolism; N-acetylneuraminate degradation; D-fructose 6-phosphate from N-acetylneuraminate: step 3/5. Its function is as follows. Converts N-acetylmannosamine-6-phosphate (ManNAc-6-P) to N-acetylglucosamine-6-phosphate (GlcNAc-6-P). The sequence is that of Putative N-acetylmannosamine-6-phosphate 2-epimerase from Clostridioides difficile (strain 630) (Peptoclostridium difficile).